We begin with the raw amino-acid sequence, 385 residues long: S-adenosylmethionine synthase (385 aa).

His-16 contacts ATP. Asp-18 lines the Mg(2+) pocket. Glu-44 contacts K(+). Residues Glu-57 and Gln-100 each contribute to the L-methionine site. The segment at 100–110 is flexible loop; that stretch reads QSPDINQGVDR. ATP is bound by residues 164 to 166, 230 to 231, Asp-239, 245 to 246, Ala-262, and Lys-266; these read DGK, KF, and RK. L-methionine is bound at residue Asp-239. Lys-270 contributes to the L-methionine binding site.

The protein belongs to the AdoMet synthase family. Homotetramer; dimer of dimers. It depends on Mg(2+) as a cofactor. Requires K(+) as cofactor.

The protein resides in the cytoplasm. It catalyses the reaction L-methionine + ATP + H2O = S-adenosyl-L-methionine + phosphate + diphosphate. The protein operates within amino-acid biosynthesis; S-adenosyl-L-methionine biosynthesis; S-adenosyl-L-methionine from L-methionine: step 1/1. Its function is as follows. Catalyzes the formation of S-adenosylmethionine (AdoMet) from methionine and ATP. The overall synthetic reaction is composed of two sequential steps, AdoMet formation and the subsequent tripolyphosphate hydrolysis which occurs prior to release of AdoMet from the enzyme. The chain is S-adenosylmethionine synthase from Helicobacter pylori (strain Shi470).